Consider the following 335-residue polypeptide: Succinylglutamate desuccinylase (335 aa).

Zn(2+)-binding residues include histidine 59, glutamate 62, and histidine 151. The active site involves glutamate 215.

This sequence belongs to the AspA/AstE family. Succinylglutamate desuccinylase subfamily. The cofactor is Zn(2+).

The enzyme catalyses N-succinyl-L-glutamate + H2O = L-glutamate + succinate. It participates in amino-acid degradation; L-arginine degradation via AST pathway; L-glutamate and succinate from L-arginine: step 5/5. In terms of biological role, transforms N(2)-succinylglutamate into succinate and glutamate. This Pseudomonas putida (strain GB-1) protein is Succinylglutamate desuccinylase.